The sequence spans 277 residues: Cis-2,3-dihydrobiphenyl-2,3-diol dehydrogenase (277 aa).

NAD(+)-binding positions include 9-36 (LITG…AVLD) and D59. A substrate-binding site is contributed by S142. Residue Y155 is the Proton acceptor of the active site. An NAD(+)-binding site is contributed by K159.

Belongs to the short-chain dehydrogenases/reductases (SDR) family.

It carries out the reaction (2R,3S)-3-phenylcyclohexa-3,5-diene-1,2-diol + NAD(+) = biphenyl-2,3-diol + NADH + H(+). Its pathway is xenobiotic degradation; biphenyl degradation; 2-hydroxy-2,4-pentadienoate and benzoate from biphenyl: step 2/4. The sequence is that of Cis-2,3-dihydrobiphenyl-2,3-diol dehydrogenase (bphB) from Paraburkholderia xenovorans (strain LB400).